A 465-amino-acid chain; its full sequence is tRNA-2-methylthio-N(6)-dimethylallyladenosine synthase (465 aa).

The MTTase N-terminal domain occupies 5 to 125 (RKLHIKSFGC…LPELLEKARR (121 aa)). [4Fe-4S] cluster contacts are provided by Cys-14, Cys-50, Cys-88, Cys-166, Cys-170, and Cys-173. The region spanning 152–382 (RARGVSAFVT…QLQGLIDSQQ (231 aa)) is the Radical SAM core domain. Residues 387–449 (RASIGTTVDV…RYSLIGELVK (63 aa)) enclose the TRAM domain.

Belongs to the methylthiotransferase family. MiaB subfamily. In terms of assembly, monomer. Requires [4Fe-4S] cluster as cofactor.

The protein resides in the cytoplasm. The catalysed reaction is N(6)-dimethylallyladenosine(37) in tRNA + (sulfur carrier)-SH + AH2 + 2 S-adenosyl-L-methionine = 2-methylsulfanyl-N(6)-dimethylallyladenosine(37) in tRNA + (sulfur carrier)-H + 5'-deoxyadenosine + L-methionine + A + S-adenosyl-L-homocysteine + 2 H(+). Catalyzes the methylthiolation of N6-(dimethylallyl)adenosine (i(6)A), leading to the formation of 2-methylthio-N6-(dimethylallyl)adenosine (ms(2)i(6)A) at position 37 in tRNAs that read codons beginning with uridine. In Rhodopseudomonas palustris (strain BisA53), this protein is tRNA-2-methylthio-N(6)-dimethylallyladenosine synthase.